Consider the following 907-residue polypeptide: Envelope glycoprotein B (907 aa).

The signal sequence occupies residues M1–S24. Over S25–P751 the chain is Virion surface. Residues R29–T62 are disordered. Over residues H41 to T62 the composition is skewed to low complexity. Residues N68, N73, and N85 are each glycosylated (N-linked (GlcNAc...) asparagine; by host). Cystine bridges form between C94/C551, C111/C507, C185/C250, and C344/C391. An involved in fusion and/or binding to host membrane region spans residues S152–T158. N208 is a glycosylation site (N-linked (GlcNAc...) asparagine; by host). Residues G237 to E244 are involved in fusion and/or binding to host membrane. Residues N281, N286, N302, N341, N383, N405, N409, N417, N447, N452, N456, N466, N555, and N586 are each glycosylated (N-linked (GlcNAc...) asparagine; by host). The cysteines at positions 574 and 611 are disulfide-linked. Residues V697 to K749 form a hydrophobic membrane proximal region region. A helical transmembrane segment spans residues F752–Y772. Topologically, residues T773–V907 are intravirion. Composition is skewed to polar residues over residues V798–A810 and R860–D877. 2 disordered regions span residues V798–P838 and A857–V907. Positions K878–R887 are enriched in basic and acidic residues. Positions Y895–L898 match the Internalization motif motif.

Belongs to the herpesviridae glycoprotein B family. In terms of assembly, homotrimer; disulfide-linked. Binds to heparan sulfate proteoglycans. Interacts with gH/gL heterodimer. A proteolytic cleavage by host furin generates two subunits that remain linked by disulfide bonds.

The protein localises to the virion membrane. The protein resides in the host cell membrane. It localises to the host endosome membrane. It is found in the host Golgi apparatus membrane. Its function is as follows. Envelope glycoprotein that forms spikes at the surface of virion envelope. Essential for the initial attachment to heparan sulfate moieties of the host cell surface proteoglycans. Involved in fusion of viral and cellular membranes leading to virus entry into the host cell. Following initial binding to its host receptors, membrane fusion is mediated by the fusion machinery composed at least of gB and the heterodimer gH/gL. May be involved in the fusion between the virion envelope and the outer nuclear membrane during virion egress. The protein is Envelope glycoprotein B of Human cytomegalovirus (strain Merlin) (HHV-5).